The sequence spans 558 residues: V-set and immunoglobulin domain-containing protein 10 (558 aa).

The first 20 residues, 1–20 (MAGLRVLLCLGALLARQGSA), serve as a signal peptide directing secretion. The Extracellular portion of the chain corresponds to 21–426 (GLQLLLNPSR…IWLSVKEPLN (406 aa)). N-linked (GlcNAc...) asparagine glycosylation is found at N32, N60, N121, N150, N159, and N218. Ig-like C2-type domains lie at 37 to 140 (PNSE…RLRV), 144 to 235 (PAYV…RKVT), 248 to 327 (PQCS…VKLS), and 332 to 420 (PSQP…IWLS). A disulfide bridge connects residues C65 and C124. Cystine bridges form between C174–C221 and C265–C308. N344 is a glycosylation site (N-linked (GlcNAc...) asparagine). C349 and C404 are joined by a disulfide. The helical transmembrane segment at 427–447 (IGGIVGTVVSLLLLGLAVVSG) threads the bilayer. At 448–558 (LTLYYSPAFW…GIVQEDGKPV (111 aa)) the chain is on the cytoplasmic side. Residues 477 to 506 (DSEEEEEEEEEEEEKEDVAEEVEQETNETE) show a composition bias toward acidic residues. Disordered regions lie at residues 477–515 (DSEE…ISKH) and 532–558 (MGNG…GKPV).

It is found in the membrane. The sequence is that of V-set and immunoglobulin domain-containing protein 10 (Vsig10) from Mus musculus (Mouse).